Consider the following 251-residue polypeptide: Sugar fermentation stimulation protein homolog (251 aa).

It belongs to the SfsA family.

This is Sugar fermentation stimulation protein homolog from Yersinia pseudotuberculosis serotype O:1b (strain IP 31758).